The sequence spans 472 residues: Exodeoxyribonuclease 7 large subunit (472 aa).

Belongs to the XseA family. Heterooligomer composed of large and small subunits.

The protein localises to the cytoplasm. It carries out the reaction Exonucleolytic cleavage in either 5'- to 3'- or 3'- to 5'-direction to yield nucleoside 5'-phosphates.. Bidirectionally degrades single-stranded DNA into large acid-insoluble oligonucleotides, which are then degraded further into small acid-soluble oligonucleotides. The protein is Exodeoxyribonuclease 7 large subunit of Carboxydothermus hydrogenoformans (strain ATCC BAA-161 / DSM 6008 / Z-2901).